Reading from the N-terminus, the 912-residue chain is Protein translocase subunit SecA (912 aa).

ATP is bound by residues glutamine 87, 105-109, and aspartate 510; that span reads GEGKT. The segment at 854–912 is disordered; it reads KLRHEQASAAQAEGEGDDGQQGQQATPETFVRQERKVGRNEPCPCGSGKKYKQCCGKVS. Residues cysteine 896, cysteine 898, cysteine 907, and cysteine 908 each contribute to the Zn(2+) site.

The protein belongs to the SecA family. Monomer and homodimer. Part of the essential Sec protein translocation apparatus which comprises SecA, SecYEG and auxiliary proteins SecDF-YajC and YidC. It depends on Zn(2+) as a cofactor.

It localises to the cell inner membrane. The protein localises to the cytoplasm. It carries out the reaction ATP + H2O + cellular proteinSide 1 = ADP + phosphate + cellular proteinSide 2.. Its function is as follows. Part of the Sec protein translocase complex. Interacts with the SecYEG preprotein conducting channel. Has a central role in coupling the hydrolysis of ATP to the transfer of proteins into and across the cell membrane, serving both as a receptor for the preprotein-SecB complex and as an ATP-driven molecular motor driving the stepwise translocation of polypeptide chains across the membrane. The chain is Protein translocase subunit SecA from Marinobacter nauticus (strain ATCC 700491 / DSM 11845 / VT8) (Marinobacter aquaeolei).